The chain runs to 254 residues: 3-deoxy-manno-octulosonate cytidylyltransferase (254 aa).

Belongs to the KdsB family.

It is found in the cytoplasm. The enzyme catalyses 3-deoxy-alpha-D-manno-oct-2-ulosonate + CTP = CMP-3-deoxy-beta-D-manno-octulosonate + diphosphate. It participates in nucleotide-sugar biosynthesis; CMP-3-deoxy-D-manno-octulosonate biosynthesis; CMP-3-deoxy-D-manno-octulosonate from 3-deoxy-D-manno-octulosonate and CTP: step 1/1. It functions in the pathway bacterial outer membrane biogenesis; lipopolysaccharide biosynthesis. Activates KDO (a required 8-carbon sugar) for incorporation into bacterial lipopolysaccharide in Gram-negative bacteria. In Haemophilus influenzae (strain PittGG), this protein is 3-deoxy-manno-octulosonate cytidylyltransferase.